A 241-amino-acid polypeptide reads, in one-letter code: MALNPLEQFKVYTVIELPRLFGYDVSFTNSSLFMMISVILVILFLLFGIKKGAVIPGYLQAAVEYVYDFVISIIENNTGSKGLQHIPLIFTVFIFILSCNLVGVLPYSFTVTSHVIVTFALSMVVFIYITIVGFKERGVEFLRILLPKGTPSWLAPIIIIIKLFAYLVRPVSLSIRLAANMIAGHTIIKVIAGFIVNMNIFFTPAPFLFIIALIGFEVFVAILQAYIFTILTCVYLSDAVK.

A run of 8 helical transmembrane segments spans residues 29 to 49 (NSSL…LFGI), 54 to 74 (VIPG…ISII), 86 to 106 (IPLI…GVLP), 114 to 134 (HVIV…IVGF), 153 to 173 (WLAP…PVSL), 177 to 197 (LAAN…FIVN), 200 to 220 (IFFT…EVFV), and 221 to 241 (AILQ…DAVK).

It belongs to the ATPase A chain family. In terms of assembly, F-type ATPases have 2 components, CF(1) - the catalytic core - and CF(0) - the membrane proton channel. CF(1) has five subunits: alpha(3), beta(3), gamma(1), delta(1), epsilon(1). CF(0) has three main subunits: a(1), b(2) and c(9-12). The alpha and beta chains form an alternating ring which encloses part of the gamma chain. CF(1) is attached to CF(0) by a central stalk formed by the gamma and epsilon chains, while a peripheral stalk is formed by the delta and b chains.

It is found in the cell inner membrane. Functionally, key component of the proton channel; it plays a direct role in the translocation of protons across the membrane. The chain is ATP synthase subunit a from Wolbachia sp. subsp. Drosophila simulans (strain wRi).